The following is a 524-amino-acid chain: RNA-binding protein 39 (524 aa).

Positions 1–146 are disordered; it reads MADDIDIEAM…PVREPIDNLT (146 aa). Ala-2 is subject to N-acetylalanine. The span at 14–32 shows a compositional bias: basic and acidic residues; it reads PYKKDENKLSSANGHEERS. Basic residues-rich tracts occupy residues 33-56 and 64-95; these read KKRKKSKSRSRSHERKRSKSKERK and KKSKSRERKRSRSKERRRSRSRSRDRRFRGRY. Phosphotyrosine is present on Tyr-95. A phosphoserine mark is found at Ser-97 and Ser-100. Residue Lys-111 forms a Glycyl lysine isopeptide (Lys-Gly) (interchain with G-Cter in SUMO2) linkage. The residue at position 117 (Ser-117) is a Phosphoserine. A Glycyl lysine isopeptide (Lys-Gly) (interchain with G-Cter in SUMO2) cross-link involves residue Lys-119. The segment covering 119 to 130 has biased composition (basic residues); it reads KLSRRRSRSKSP. Residues Ser-121 and Ser-136 each carry the phosphoserine modification. Residues 131-146 are compositionally biased toward basic and acidic residues; the sequence is FRKDKSPVREPIDNLT. The residue at position 146 (Thr-146) is a Phosphothreonine. In terms of domain architecture, RRM 1 spans 153-230; that stretch reads RTVFCMQLAA…VPIIVQASQA (78 aa). Residue Lys-244 forms a Glycyl lysine isopeptide (Lys-Gly) (interchain with G-Cter in SUMO2) linkage. The RRM 2 domain occupies 250–328; sequence MRLYVGSLHF…RPMKVGHVTE (79 aa). The activating domain stretch occupies residues 291–355; it reads KGYGFITFSD…RTGIDLGTTG (65 aa). Positions 291–400 are interaction with JUN; sequence KGYGFITFSD…ADLQTRLSQQ (110 aa). Residues Ser-334, Ser-337, and Ser-341 each carry the phosphoserine modification. Residues 355–400 are interaction with ESR1 and ESR2; sequence GRLQLMARLAEGTGLQIPPAAQQALQMSGSLAFGAVADLQTRLSQQ. Residues 400–524 form an interaction with NCOA6 region; that stretch reads QTEASALAAA…ATQLLVPSRR (125 aa). The RRM 3 domain occupies 439–502; it reads EIKDDVIEEC…KMITAAYVPL (64 aa).

The protein belongs to the splicing factor SR family. In terms of assembly, interacts with NCOA6 and JUN. Interacts with ESR1 and ESR2, in the presence of estradiol (E2). Interacts with RSRC1 (via Arg/Ser-rich domain). Interacts with SF3B1. Interacts with ZNF106 (via N-terminus).

The protein localises to the nucleus speckle. RNA-binding protein that acts as a pre-mRNA splicing factor. Acts by promoting exon inclusion via regulation of exon cassette splicing. Also acts as a transcriptional coactivator for steroid nuclear receptors ESR1/ER-alpha and ESR2/ER-beta, and JUN/AP-1, independently of the pre-mRNA splicing factor activity. This Pongo abelii (Sumatran orangutan) protein is RNA-binding protein 39 (RBM39).